Here is a 164-residue protein sequence, read N- to C-terminus: MNIAICPGSFDPITTGHLDIIRRASKLFDHVVVAVGSNLRKQPRLSAAERARLIEKVTADLENVSVEVMEGLLVDFAREQGARVVVKGLRAVSDFESEFEQAQLNRTLYPELETVFIMSASQHSFLSSSAVREIAALGGDVRGLVPDGILETVRQIYSRSDGKI.

Ser-9 is a substrate binding site. ATP contacts are provided by residues 9 to 10 (SF) and His-17. Lys-41, Leu-73, and Lys-87 together coordinate substrate. ATP-binding positions include 88–90 (GLR), Glu-98, and 123–129 (HSFLSSS).

The protein belongs to the bacterial CoaD family. As to quaternary structure, homohexamer. It depends on Mg(2+) as a cofactor.

It is found in the cytoplasm. It catalyses the reaction (R)-4'-phosphopantetheine + ATP + H(+) = 3'-dephospho-CoA + diphosphate. It participates in cofactor biosynthesis; coenzyme A biosynthesis; CoA from (R)-pantothenate: step 4/5. In terms of biological role, reversibly transfers an adenylyl group from ATP to 4'-phosphopantetheine, yielding dephospho-CoA (dPCoA) and pyrophosphate. This is Phosphopantetheine adenylyltransferase from Rubrobacter xylanophilus (strain DSM 9941 / JCM 11954 / NBRC 16129 / PRD-1).